Reading from the N-terminus, the 497-residue chain is Glycerol kinase (497 aa).

Thr11 contacts ADP. Residues Thr11, Ser12, and Ser13 each coordinate ATP. Thr11 provides a ligand contact to sn-glycerol 3-phosphate. Arg15 provides a ligand contact to ADP. Arg81, Glu82, Tyr133, and Asp242 together coordinate sn-glycerol 3-phosphate. Glycerol-binding residues include Arg81, Glu82, Tyr133, Asp242, and Gln243. ADP contacts are provided by Thr264 and Gly307. ATP contacts are provided by Thr264, Gly307, Gln311, and Gly412. ADP is bound by residues Gly412 and Asn416.

The protein belongs to the FGGY kinase family.

It catalyses the reaction glycerol + ATP = sn-glycerol 3-phosphate + ADP + H(+). It functions in the pathway polyol metabolism; glycerol degradation via glycerol kinase pathway; sn-glycerol 3-phosphate from glycerol: step 1/1. With respect to regulation, inhibited by fructose 1,6-bisphosphate (FBP). In terms of biological role, key enzyme in the regulation of glycerol uptake and metabolism. Catalyzes the phosphorylation of glycerol to yield sn-glycerol 3-phosphate. The chain is Glycerol kinase from Polaromonas naphthalenivorans (strain CJ2).